Consider the following 250-residue polypeptide: Accessory gland-specific peptide 26Aa (250 aa).

The signal sequence occupies residues 1–18 (MNQILLCSQILLLFFTVA). Positions 79–100 (DYPINNSKSRKNSSTLPSPILT) are disordered. Polar residues predominate over residues 82–95 (INNSKSRKNSSTLP). Residues Asn-83, Asn-90, and Asn-131 are each glycosylated (N-linked (GlcNAc...) asparagine). 2 disordered regions span residues 172-191 (NVQN…SKDI) and 230-250 (NNPA…PSTT). Positions 178–187 (KSTKSCKKRP) are enriched in basic residues. Over residues 240-250 (KSPSEGNPSTT) the composition is skewed to polar residues.

Proteolytically cleaved as it is secreted and in the recipient female. As to expression, main cells of the accessory glands of males.

It is found in the secreted. Its subcellular location is the extracellular space. Functionally, this protein is transferred from male to female's hemolymph during mating, affecting egglaying and behavior after mating. The chain is Accessory gland-specific peptide 26Aa (Acp26Aa) from Drosophila mauritiana (Fruit fly).